The chain runs to 108 residues: TYRO protein tyrosine kinase-binding protein (108 aa).

The signal sequence occupies residues 1–25 (MGRLGPSNGLLPLLLAVGGFSLVQA). At 26–36 (QRECSCSAVSP) the chain is on the extracellular side. A helical membrane pass occupies residues 37 to 57 (GILAGIVLGDLVLTLLIALAV). A Ca(2+)-binding site is contributed by D46. At 58–108 (YSLGRLVPRTRGAVDVTRKQHIAETESAYQELQGQRSDVYSDLNTQRQYYK) the chain is on the cytoplasmic side. The ITAM domain maps to 75–103 (RKQHIAETESAYQELQGQRSDVYSDLNTQ). Phosphotyrosine is present on residues Y86 and Y97.

This sequence belongs to the TYROBP family. As to quaternary structure, homodimer; disulfide-linked. Homotrimer; disulfide-linked. Homotetramer; disulfide-linked. Homotrimers and homotetramers form when low levels of partner receptors are available and is competitive with assembly with interacting receptors. They may represent alternative oligomerization states or may be intermediates in the receptor assembly process. Binding of a metal cation aids in homooligomerization through coordination of the metal ion by the subunits of the oligomer. Interacts with TREM1. Interacts with TREM2. Interacts with CLECSF5. Interacts with CD300LB and CD300C2. Interacts with CD300E. Interacts (via ITAM domain) with SYK (via SH2 domains); activates SYK mediating neutrophils and macrophages integrin-mediated activation. Interacts with KLRC2. Interacts with CD300H. Interacts with KLRD1. Interacts with SIGLEC1. Following ligand binding by associated receptors, tyrosine phosphorylated in the ITAM domain which leads to activation of additional tyrosine kinases and subsequent cell activation. As to expression, highly expressed in spleen, liver and thymus. Weakly expressed in lymph nodes. Expressed in peripheral blood leukocytes, granulocytes, macrophages, and monocytes. LPS does not increase expression in granulocytes.

The protein resides in the cell membrane. Adapter protein which non-covalently associates with activating receptors found on the surface of a variety of immune cells to mediate signaling and cell activation following ligand binding by the receptors. TYROBP is tyrosine-phosphorylated in the ITAM domain following ligand binding by the associated receptors which leads to activation of additional tyrosine kinases and subsequent cell activation. Also has an inhibitory role in some cells. Non-covalently associates with activating receptors of the CD300 family to mediate cell activation. Also mediates cell activation through association with activating receptors of the CD200R family. Required for neutrophil activation mediated by integrin. Required for the activation of myeloid cells mediated by the CLEC5A/MDL1 receptor. Associates with natural killer (NK) cell receptors such as the KLRD1/KLRC2 heterodimer to mediate NK cell activation. Associates with TREM1 to mediate activation of neutrophils and monocytes. Associates with TREM2 on monocyte-derived dendritic cells to mediate up-regulation of chemokine receptor CCR7 and dendritic cell maturation and survival. Association with TREM2 mediates cytokine-induced formation of multinucleated giant cells which are formed by the fusion of macrophages. Stabilizes the TREM2 C-terminal fragment (TREM2-CTF) produced by TREM2 ectodomain shedding which suppresses the release of pro-inflammatory cytokines. In microglia, required with TREM2 for phagocytosis of apoptotic neurons. Required with ITGAM/CD11B in microglia to control production of microglial superoxide ions which promote the neuronal apoptosis that occurs during brain development. Promotes pro-inflammatory responses in microglia following nerve injury which accelerates degeneration of injured neurons. Positively regulates the expression of the IRAK3/IRAK-M kinase and IL10 production by liver dendritic cells and inhibits their T cell allosimulatory ability. Negatively regulates B cell proliferation. Required for CSF1-mediated osteoclast cytoskeletal organization. Positively regulates multinucleation during osteoclast development. The polypeptide is TYRO protein tyrosine kinase-binding protein (Sus scrofa (Pig)).